A 307-amino-acid chain; its full sequence is NAD kinase (307 aa).

Asp80 serves as the catalytic Proton acceptor. NAD(+)-binding positions include 80–81, His85, 154–155, His165, His182, Asp184, 195–200, and Gln254; these read DG, ND, and TAYALS.

The protein belongs to the NAD kinase family. It depends on a divalent metal cation as a cofactor.

Its subcellular location is the cytoplasm. It carries out the reaction NAD(+) + ATP = ADP + NADP(+) + H(+). Its function is as follows. Involved in the regulation of the intracellular balance of NAD and NADP, and is a key enzyme in the biosynthesis of NADP. Catalyzes specifically the phosphorylation on 2'-hydroxyl of the adenosine moiety of NAD to yield NADP. The chain is NAD kinase from Acinetobacter baylyi (strain ATCC 33305 / BD413 / ADP1).